A 575-amino-acid chain; its full sequence is uncharacterized protein (575 aa).

6 helical membrane passes run 16–36 (FFLD…FPLI), 50–70 (WGLI…SSAL), 132–152 (PEDL…MLFI), 154–174 (WQLA…ALYF), 243–263 (ISYM…TWFV), and 264–284 (IRGS…NVLF). The region spanning 16–299 (FFLDFFSAIA…INAIIEMYPR (284 aa)) is the ABC transmembrane type-1 domain. Residues 333-567 (IRYKHVSFGY…GGLYSRLHQA (235 aa)) form the ABC transporter domain. 366 to 373 (GPSGAGKS) lines the ATP pocket.

The protein belongs to the ABC transporter superfamily.

It is found in the cell membrane. It localises to the membrane raft. This is an uncharacterized protein from Bacillus subtilis (strain 168).